Consider the following 248-residue polypeptide: Ferric nitrobindin-like protein (248 aa).

Polar residues-rich tracts occupy residues 1–25 and 32–43; these read MSSD…TNSG and QAVNLAAEQSKS. The tract at residues 1 to 49 is disordered; the sequence is MSSDKANNQSPDQGANTPAESTNSGPKLDGNQAVNLAAEQSKSTADKNL. The short motif at 82–88 is the GXWXGXG element; it reads GVWRGQG. A disordered region spans residues 118 to 147; it reads SRTWKINPPAEEGAEADGDEASAESAGEPE. Over residues 129-139 the composition is skewed to acidic residues; sequence EGAEADGDEAS.

The protein belongs to the nitrobindin family.

The protein is Ferric nitrobindin-like protein of Corynebacterium urealyticum (strain ATCC 43042 / DSM 7109).